A 361-amino-acid chain; its full sequence is Chorismate synthase (361 aa).

Residue R47 coordinates NADP(+). FMN contacts are provided by residues 124–126 (RAS), G286, 301–305 (KPTAT), and R327.

Belongs to the chorismate synthase family. In terms of assembly, homotetramer. FMNH2 is required as a cofactor.

It catalyses the reaction 5-O-(1-carboxyvinyl)-3-phosphoshikimate = chorismate + phosphate. Its pathway is metabolic intermediate biosynthesis; chorismate biosynthesis; chorismate from D-erythrose 4-phosphate and phosphoenolpyruvate: step 7/7. Functionally, catalyzes the anti-1,4-elimination of the C-3 phosphate and the C-6 proR hydrogen from 5-enolpyruvylshikimate-3-phosphate (EPSP) to yield chorismate, which is the branch point compound that serves as the starting substrate for the three terminal pathways of aromatic amino acid biosynthesis. This reaction introduces a second double bond into the aromatic ring system. This chain is Chorismate synthase, found in Akkermansia muciniphila (strain ATCC BAA-835 / DSM 22959 / JCM 33894 / BCRC 81048 / CCUG 64013 / CIP 107961 / Muc).